The following is a 642-amino-acid chain: DNA primase (642 aa).

Residues 41–65 (CPFHNEKSPSFHVRPNHGHFHCFGC) form a CHC2-type zinc finger. The region spanning 262–348 (HQAVVVEGYT…AGKSFVAVAA (87 aa)) is the Toprim domain. Positions 268, 319, and 321 each coordinate Mg(2+). The tract at residues 445–480 (NRRSVPERTRRRSVSVEQSPFMQPPGAPADQLAARP) is disordered.

It belongs to the DnaG primase family. In terms of assembly, monomer. Interacts with DnaB. Zn(2+) is required as a cofactor. It depends on Mg(2+) as a cofactor.

The enzyme catalyses ssDNA + n NTP = ssDNA/pppN(pN)n-1 hybrid + (n-1) diphosphate.. Functionally, RNA polymerase that catalyzes the synthesis of short RNA molecules used as primers for DNA polymerase during DNA replication. The sequence is that of DNA primase from Mycobacterium leprae (strain TN).